Reading from the N-terminus, the 294-residue chain is MPNPLQKSLHGYLSKIKKETGKLQLSSSHSFSSSKNWVLGKHPKKLSFSFKHRRRSSKTRFSKEEPVYHQDSAHAATLSDIDRFLEENFKSLCIRDDQEDDQHQARVTKNKEKRESSSDDSDDDDDDDDYRHRFERTWGHAVYDSPKQPPDLLRTERLSPPPGSSEGRPSMETTSTSSERQSRSTLVLPENCIAVLRYTDEPQEDFRQSMVEMMESKLGMRESEVDWDLMEELLFCYLDLNDKKSHKFILSAFVDLIIALREKEKRITRKGHVRSLSTRAARDRLRKRMIMSDN.

The span at 49 to 60 shows a compositional bias: basic residues; the sequence is SFKHRRRSSKTR. Disordered stretches follow at residues 49–72, 96–129, and 141–185; these read SFKH…HQDS, DDQE…DDDD, and AVYD…SRST. Basic and acidic residues-rich tracts occupy residues 61-72 and 96-117; these read FSKEEPVYHQDS and DDQE…RESS. Acidic residues predominate over residues 118-128; it reads SDDSDDDDDDD. The span at 164–185 shows a compositional bias: low complexity; that stretch reads SSEGRPSMETTSTSSERQSRST. The region spanning 195–259 is the OVATE domain; that stretch reads VLRYTDEPQE…LSAFVDLIIA (65 aa).

In terms of assembly, interacts with KNAT2 and KNAT3. As to expression, expressed in roots, rosette and cauline leaves, shoots, stems, flower buds and siliques.

The protein localises to the nucleus. In terms of biological role, transcriptional repressor that may regulate multiple aspects of plant growth and development through the regulation of BEL1-LIKE (BLH) and KNOX TALE (KNAT) homeodomain transcription factors. The sequence is that of Transcription repressor OFP14 (OFP14) from Arabidopsis thaliana (Mouse-ear cress).